A 300-amino-acid polypeptide reads, in one-letter code: Probable membrane transporter protein YtnM (300 aa).

The next 8 membrane-spanning stretches (helical) occupy residues 4 to 24, 33 to 53, 76 to 96, 102 to 122, 139 to 159, 206 to 226, 231 to 251, and 260 to 280; these read LIVFAFIGLLSQLIDGSLGMA, LLAFGITPAVASASVHLAEVV, LVIPGSIGAFLGAAFLSQLPG, YISLFLLLLGGYVLIRFLFQY, IPLGVIAGFADATGGGGWGPV, LWVFSLMAGGIIAAPIAAWLV, PQLMGVLVGGFIILVNARTLI, and VHPLIYTAIGAIWLSAVLFVL.

Belongs to the 4-toluene sulfonate uptake permease (TSUP) (TC 2.A.102) family.

It is found in the cell membrane. This Bacillus subtilis (strain 168) protein is Probable membrane transporter protein YtnM (ytnM).